Consider the following 452-residue polypeptide: Pup--protein ligase (452 aa).

Glu9 provides a ligand contact to Mg(2+). Position 53 (Arg53) interacts with ATP. A Mg(2+)-binding site is contributed by Tyr55. Asp57 (proton acceptor) is an active-site residue. Glu63 is a binding site for Mg(2+). ATP contacts are provided by Thr66 and Trp419.

The protein belongs to the Pup ligase/Pup deamidase family. Pup-conjugating enzyme subfamily.

The enzyme catalyses ATP + [prokaryotic ubiquitin-like protein]-L-glutamate + [protein]-L-lysine = ADP + phosphate + N(6)-([prokaryotic ubiquitin-like protein]-gamma-L-glutamyl)-[protein]-L-lysine.. The protein operates within protein degradation; proteasomal Pup-dependent pathway. It functions in the pathway protein modification; protein pupylation. Catalyzes the covalent attachment of the prokaryotic ubiquitin-like protein modifier Pup to the proteasomal substrate proteins, thereby targeting them for proteasomal degradation. This tagging system is termed pupylation. The ligation reaction involves the side-chain carboxylate of the C-terminal glutamate of Pup and the side-chain amino group of a substrate lysine. This is Pup--protein ligase from Mycobacterium leprae (strain Br4923).